A 492-amino-acid chain; its full sequence is Malonyl-CoA decarboxylase, mitochondrial (492 aa).

The disordered stretch occupies residues 1 to 28 (MRGLGPGLRARRLLPLRSPPRPPGPRGR). The transit peptide at 1-38 (MRGLGPGLRARRLLPLRSPPRPPGPRGRRLCGGLAASA) directs the protein to the mitochondrion. The tract at residues 39–189 (MDELLRRAVP…VLKSMLSEWF (151 aa)) is alpha-helical domain. K58 is subject to N6-acetyllysine. K167 is modified (N6-acetyllysine; alternate). Residue K167 is modified to N6-succinyllysine; alternate. The catalytic domain stretch occupies residues 190–492 (SSGFLNLERV…VAQFQNNSKL (303 aa)). K210 is modified (N6-acetyllysine). K221 carries the N6-succinyllysine modification. 298-304 (QGVELGT) contacts malonyl-CoA. An N6-acetyllysine modification is found at K316. Residue S328 participates in malonyl-CoA binding. The active-site Proton acceptor is S328. K385 bears the N6-acetyllysine; alternate mark. K385 is subject to N6-succinyllysine; alternate. Residue K388 is modified to N6-acetyllysine. H422 provides a ligand contact to malonyl-CoA. Catalysis depends on H422, which acts as the Proton donor. An N6-acetyllysine mark is found at K441 and K471. The Microbody targeting signal signature appears at 490-492 (SKL).

In terms of assembly, homotetramer. Dimer of dimers. The two subunits within a dimer display conformational differences suggesting that at any given moment, only one of the two subunits is competent for malonyl-CoA binding and catalytic activity. Under oxidizing conditions, can form disulfide-linked homotetramers (in vitro). Associates with the peroxisomal targeting signal receptor PEX5. In terms of processing, interchain disulfide bonds may form in peroxisomes (Potential). Interchain disulfide bonds are not expected to form in the reducing environment of the cytoplasm and mitochondria. Acetylation at Lys-471 activates malonyl-CoA decarboxylase activity. Deacetylation at Lys-471 by SIRT4 represses activity, leading to promote lipogenesis.

Its subcellular location is the cytoplasm. It is found in the mitochondrion matrix. The protein localises to the peroxisome. The protein resides in the peroxisome matrix. The enzyme catalyses malonyl-CoA + H(+) = acetyl-CoA + CO2. It participates in metabolic intermediate biosynthesis; acetyl-CoA biosynthesis; acetyl-CoA from malonyl-CoA: step 1/1. Malonyl-CoA decarboxylase activity does not require any cofactors or divalent metal ions. Functionally, catalyzes the conversion of malonyl-CoA to acetyl-CoA. In the fatty acid biosynthesis MCD selectively removes malonyl-CoA and thus assures that methyl-malonyl-CoA is the only chain elongating substrate for fatty acid synthase and that fatty acids with multiple methyl side chains are produced. In peroxisomes it may be involved in degrading intraperoxisomal malonyl-CoA, which is generated by the peroxisomal beta-oxidation of odd chain-length dicarboxylic fatty acids. Plays a role in the metabolic balance between glucose and lipid oxidation in muscle independent of alterations in insulin signaling. Plays a role in controlling the extent of ischemic injury by promoting glucose oxidation. The sequence is that of Malonyl-CoA decarboxylase, mitochondrial from Mus musculus (Mouse).